The following is a 97-amino-acid chain: Acylphosphatase (97 aa).

Residues 9–97 form the Acylphosphatase-like domain; the sequence is RKHIVVTGLV…ETARAFGVRQ (89 aa). Catalysis depends on residues Arg24 and Asn42.

This sequence belongs to the acylphosphatase family.

It carries out the reaction an acyl phosphate + H2O = a carboxylate + phosphate + H(+). This Bifidobacterium longum (strain NCC 2705) protein is Acylphosphatase (acyP).